A 333-amino-acid polypeptide reads, in one-letter code: Phosphate acyltransferase (333 aa).

The protein belongs to the PlsX family. As to quaternary structure, homodimer. Probably interacts with PlsY.

It is found in the cytoplasm. The catalysed reaction is a fatty acyl-[ACP] + phosphate = an acyl phosphate + holo-[ACP]. It participates in lipid metabolism; phospholipid metabolism. In terms of biological role, catalyzes the reversible formation of acyl-phosphate (acyl-PO(4)) from acyl-[acyl-carrier-protein] (acyl-ACP). This enzyme utilizes acyl-ACP as fatty acyl donor, but not acyl-CoA. In Lactobacillus helveticus (strain DPC 4571), this protein is Phosphate acyltransferase.